Reading from the N-terminus, the 402-residue chain is Multidrug resistance protein MdtH (402 aa).

10 consecutive transmembrane segments (helical) span residues 13–33, 34–54, 99–116, 139–159, 165–185, 214–234, 244–264, 277–297, 340–360, and 368–388; these read YFLLIDNLLVVLGFFVVFPLI, SIRFVDQLGWAALIVGIALGL, PWILWASCTLSALGGTLF, LLMMQDSAGAVIGALIGSWLL, YVCWAGAALFVLAAAWNAWLL, VLTLTGYYMLAVQVMLMLPIM, AVKWMYAIEAALSLTLLYPIA, LMFGLLLMTLSLFPLGLSTTL, LGLALGGALGYTGGGWMYDMG, and LPWALLGIIGMLTLALLYWQF.

Belongs to the major facilitator superfamily. DHA1 family. MdtH (TC 2.A.1.2.21) subfamily.

Its subcellular location is the cell inner membrane. The polypeptide is Multidrug resistance protein MdtH (Edwardsiella ictaluri (strain 93-146)).